The chain runs to 73 residues: RNA-binding protein Hfq (73 aa).

One can recognise a Sm domain in the interval 8–68; sequence DQFLNQIRKE…ISTFAPQKNV (61 aa).

This sequence belongs to the Hfq family. As to quaternary structure, homohexamer.

RNA chaperone that binds small regulatory RNA (sRNAs) and mRNAs to facilitate mRNA translational regulation in response to envelope stress, environmental stress and changes in metabolite concentrations. Also binds with high specificity to tRNAs. This chain is RNA-binding protein Hfq, found in Bacillus subtilis (strain 168).